The primary structure comprises 98 residues: Gas vesicle protein A (98 aa).

Belongs to the gas vesicle GvpA family. In terms of assembly, the gas vesicle shell is 2 nm thick and consists of a single layer of this protein. It forms helical ribs nearly perpendicular to the long axis of the vesicle.

The protein resides in the gas vesicle shell. Gas vesicles are hollow, gas filled proteinaceous nanostructures found in some microorganisms. During planktonic growth they allow positioning of the organism at a favorable depth for light or nutrient acquisition. GvpA forms the protein shell. The chain is Gas vesicle protein A from Koribacter versatilis (strain Ellin345).